The chain runs to 222 residues: uncharacterized protein (222 aa).

Helical transmembrane passes span 26–46 (YGLL…SQQM), 48–68 (LPYP…FLTV), 75–95 (WGLV…GPIL), 107–127 (VITS…AYVL), 139–159 (FITA…FFQI), 166–186 (ISAG…SAII), and 198–218 (ISLY…FGIA).

It belongs to the BI1 family.

It is found in the cell membrane. This is an uncharacterized protein from Pseudomonas aeruginosa (strain ATCC 15692 / DSM 22644 / CIP 104116 / JCM 14847 / LMG 12228 / 1C / PRS 101 / PAO1).